The chain runs to 89 residues: Cell division protein FtsL (89 aa).

Residues Met-1 to Leu-6 lie on the Cytoplasmic side of the membrane. Residues Asn-7–Gln-24 form a helical membrane-spanning segment. Over Gln-25–Arg-89 the chain is Periplasmic. Positions Thr-33 to Asn-73 form a coiled coil.

This sequence belongs to the FtsL family. As to quaternary structure, part of a complex composed of FtsB, FtsL and FtsQ.

It localises to the cell inner membrane. In terms of biological role, essential cell division protein. May link together the upstream cell division proteins, which are predominantly cytoplasmic, with the downstream cell division proteins, which are predominantly periplasmic. The sequence is that of Cell division protein FtsL from Neisseria meningitidis serogroup B (strain ATCC BAA-335 / MC58).